A 490-amino-acid chain; its full sequence is MYHGMNPSNGDGFLEQQLQQQQPQSPQRLLAVILWFQLALCFGPAQLTGGFDDLNVCADPGVPENGFRTPSGGVFFESSVTRFHCQDGFRLKGSTKRLCMKHFNGTLGWVPSDKPVCIQEDCRIPQIEDAEIRNKTYRHGEKLVIDCHEGFKIRYPDLYNLVSLCRDDGTWDNLPICQGCLRPLASSNGYVNISEFQTSFPVGTVIAYRCFPGFKLEGSENLECLHNLIWSSSPPRCLALEVCPLPPMVSHGDFICHPRPCERYNHGTVVEFYCDPGYSLTSDYKYITCQYGEWFPSYQVYCIKSEQTWPSTHETLLTTWKIVAFTATSVLLVLLLVILARMFQTKFKAHFPPRGPPRSSSSDPDFVVVDGVPVMLPTYDEAVNGSSSALGPGYPASVGQGCPLPVDDQSPPAYPGSGDTDTGPGESETCDSTSGSSEMLQSLYSPPMCQGGSRPAPDTPDTISSTAGEVASTSPGIDIADEIPLMEEDP.

The segment at 1–20 (MYHGMNPSNGDGFLEQQLQQ) is disordered. Positions 1-41 (MYHGMNPSNGDGFLEQQLQQQQPQSPQRLLAVILWFQLALC) are cleaved as a signal peptide. Over 42-319 (FGPAQLTGGF…PSTHETLLTT (278 aa)) the chain is Extracellular. 4 Sushi domains span residues 55-119 (NVCA…VCIQ), 120-179 (EDCR…ICQG), 178-239 (QGCL…RCLA), and 241-304 (EVCP…YCIK). Disulfide bonds link Cys57-Cys99, Cys85-Cys117, Cys122-Cys165, Cys147-Cys177, Cys180-Cys224, Cys210-Cys237, Cys243-Cys289, and Cys274-Cys302. Asn104 and Asn134 each carry an N-linked (GlcNAc...) asparagine glycan. The N-linked (GlcNAc...) asparagine glycan is linked to Asn192. A helical membrane pass occupies residues 320-340 (WKIVAFTATSVLLVLLLVILA). Residues 341-490 (RMFQTKFKAH…DEIPLMEEDP (150 aa)) are Cytoplasmic-facing. The tract at residues 394 to 490 (YPASVGQGCP…DEIPLMEEDP (97 aa)) is disordered. Composition is skewed to polar residues over residues 430–444 (CDST…QSLY) and 461–475 (DTIS…STSP). A compositionally biased stretch (acidic residues) spans 479 to 490 (IADEIPLMEEDP).

As to expression, high expression in brain and eye, with weaker expression in spinal cord and testis. Detected in white matter of brain and in the outer segments of photoreceptors.

The protein localises to the membrane. Its function is as follows. Acts as a complement inhibitor by disrupting the formation of the classical C3 convertase. Isoform 3 inhibits the classical complement pathway, while membrane-bound isoform 1 inhibits deposition of C3b via both the classical and alternative complement pathways. This Mus musculus (Mouse) protein is Sushi domain-containing protein 4 (Susd4).